Here is an 86-residue protein sequence, read N- to C-terminus: UPF0457 protein BCE33L2265 (86 aa).

The protein belongs to the UPF0457 family.

In Bacillus cereus (strain ZK / E33L), this protein is UPF0457 protein BCE33L2265.